We begin with the raw amino-acid sequence, 75 residues long: DNA-directed RNA polymerase subunit Rpo6 (75 aa).

It belongs to the archaeal Rpo6/eukaryotic RPB6 RNA polymerase subunit family. In terms of assembly, part of the RNA polymerase complex.

The protein localises to the cytoplasm. The catalysed reaction is RNA(n) + a ribonucleoside 5'-triphosphate = RNA(n+1) + diphosphate. Functionally, DNA-dependent RNA polymerase (RNAP) catalyzes the transcription of DNA into RNA using the four ribonucleoside triphosphates as substrates. The protein is DNA-directed RNA polymerase subunit Rpo6 of Archaeoglobus fulgidus (strain ATCC 49558 / DSM 4304 / JCM 9628 / NBRC 100126 / VC-16).